Reading from the N-terminus, the 357-residue chain is Spore wall and anchoring disk complex protein EnP1 (357 aa).

Residues 1–16 (MKLLGFLIVGLSAISA) form the signal peptide. N-linked (GlcNAc...) asparagine glycosylation is present at N47. An HBM1 motif is present at residues 150-158 (ERRPHYKKI). The HBM2 motif lies at 329–334 (LKKVRG).

Its subcellular location is the spore wall. It localises to the spore. It is found in the perispore. Spore wall protein involved in the adhesion to host cells surface glycoaminoglycans (GAGs). Microsporidian spore adherence is an integral part of activation and host cell invasion which requires the extrusion at the spore apex of a very long and coiled structure, the polar tube, through which the sporoplasm is pushed to enter into the potential host cell. The polypeptide is Spore wall and anchoring disk complex protein EnP1 (EnP1) (Encephalitozoon cuniculi (strain GB-M1) (Microsporidian parasite)).